The primary structure comprises 123 residues: MARISGIDLPKEKRVEIGLTYIYGIGLPTSQEILEATGVNPDTRVKDLSEEEVNAIRDYVNKNVKVEGDLRREIKLNIKRLVEIGSYRGIRHRRNLPVRGQKTKTNARTRKGPKRAIGGKKKK.

The interval 93 to 123 (RRNLPVRGQKTKTNARTRKGPKRAIGGKKKK) is disordered.

This sequence belongs to the universal ribosomal protein uS13 family. As to quaternary structure, part of the 30S ribosomal subunit. Forms a loose heterodimer with protein S19. Forms two bridges to the 50S subunit in the 70S ribosome.

Located at the top of the head of the 30S subunit, it contacts several helices of the 16S rRNA. In the 70S ribosome it contacts the 23S rRNA (bridge B1a) and protein L5 of the 50S subunit (bridge B1b), connecting the 2 subunits; these bridges are implicated in subunit movement. Contacts the tRNAs in the A and P-sites. This chain is Small ribosomal subunit protein uS13, found in Clostridium botulinum (strain Loch Maree / Type A3).